We begin with the raw amino-acid sequence, 495 residues long: UDP-glycosyltransferase 73C25 (495 aa).

23–26 contributes to the UDP-alpha-D-glucose binding site; sequence GHMI. His-24 (proton acceptor) is an active-site residue. The active-site Charge relay is Asp-129. UDP-alpha-D-glucose-binding positions include 355-358, 373-381, and 397-398; these read WSPQ, HCGWNSTLE, and DQ.

Belongs to the UDP-glycosyltransferase family.

Its function is as follows. Catalyzes the transfer of a glucose (Glc) moiety from UDP-Glc to the C-28 carboxylic group of oleanolate 3-O-beta-D-glucoside to form oleanolate 3,28-O-beta-D-diglucoside. This chain is UDP-glycosyltransferase 73C25, found in Barbarea vulgaris (Yellow rocket).